We begin with the raw amino-acid sequence, 692 residues long: Highly divergent homeobox (692 aa).

The homeobox 1 DNA-binding region spans 3-63 (LRSVFTVEQQ…NKRRKMSSKS (61 aa)). Residues 117–133 (SSSSKQGTTKHTNTQIT) show a composition bias toward polar residues. The disordered stretch occupies residues 117–136 (SSSSKQGTTKHTNTQITEAH). Residues K137, K142, K146, K165, K174, K196, K214, K223, and K234 each participate in a glycyl lysine isopeptide (Lys-Gly) (interchain with G-Cter in SUMO2) cross-link. The segment at residues 437–500 (ALQDRTQFSD…NRRRKYRLMG (64 aa)) is a DNA-binding region (homeobox 2). Disordered stretches follow at residues 505 to 541 (PPRG…DNDR) and 647 to 692 (KDQQ…SDSL). Over residues 676 to 692 (TSLSVSSLSEKNASDSL) the composition is skewed to polar residues.

The protein localises to the nucleus. This chain is Highly divergent homeobox (Hdx), found in Mus musculus (Mouse).